The following is a 256-amino-acid chain: Protein FixA (256 aa).

It belongs to the ETF beta-subunit/FixA family. Heterodimer of FixA and FixB.

It functions in the pathway amine and polyamine metabolism; carnitine metabolism. Required for anaerobic carnitine reduction. May bring reductant to CaiA. The sequence is that of Protein FixA from Escherichia coli O17:K52:H18 (strain UMN026 / ExPEC).